We begin with the raw amino-acid sequence, 495 residues long: UDP-glycosyltransferase 73C6 (495 aa).

Residues Ser-296, 356–358 (SPQ), 373–381 (HCGWNSTLE), and 395–398 (FADQ) contribute to the UDP-alpha-D-glucose site. Positions 449–475 (SDDAKERRRRAKELGESAHKAVEEGGS) are disordered. Residues 450-471 (DDAKERRRRAKELGESAHKAVE) show a composition bias toward basic and acidic residues.

Belongs to the UDP-glycosyltransferase family. In terms of tissue distribution, expressed in leaves and flowers, and at a very low level in roots.

Its function is as follows. Acts as a UDP-glucose:flavonol-3-O-glycoside-7-O-glucosyltransferase. 6- and 7-hydroxyflavone, but not 3- or 5-hydroxyflavone are accepted as substrates. Possesses low quercetin 3-O-glucosyltransferase, 7-O-glucosyltransferase and 4'-O-glucosyltransferase activities in vitro. In Arabidopsis thaliana (Mouse-ear cress), this protein is UDP-glycosyltransferase 73C6 (UGT73C6).